Reading from the N-terminus, the 417-residue chain is GTP-binding protein YPT11 (417 aa).

Residues 1–34 are disordered; the sequence is MSQRKRYSLNVVTSPSIPSPTPSAPIRTNESNWE. GTP-binding positions include 97-104, 228-232, and 292-295; these read GDANVGKT, DTAGQ, and NKID. S-geranylgeranyl cysteine attachment occurs at residues C415 and C416.

It belongs to the small GTPase superfamily. Rab family. As to quaternary structure, interacts with MYO2 (via C-terminal tail domain). Interacts with YIF1, YIP3, YIP4 and YIP5.

The protein resides in the endoplasmic reticulum membrane. Its subcellular location is the bud tip. It is found in the bud neck. Involved in the positive control of both endoplasmic reticulum (ER) and mitochondrion inheritance during cell divison. Required for the MYO2-dependent retention of newly inherited mitochondria at the bud tip in developing daughter cells. The sequence is that of GTP-binding protein YPT11 (YPT11) from Saccharomyces cerevisiae (strain YJM789) (Baker's yeast).